Reading from the N-terminus, the 435-residue chain is Adenylosuccinate synthetase (435 aa).

GTP is bound by residues 13–19 (GDEGKGK) and 41–43 (GHT). Aspartate 14 (proton acceptor) is an active-site residue. Aspartate 14 and glycine 41 together coordinate Mg(2+). IMP contacts are provided by residues 14-17 (DEGK), 39-42 (NAGH), threonine 131, arginine 145, glutamine 226, threonine 241, and arginine 309. The active-site Proton donor is histidine 42. Residue 305–311 (TVTGRKR) participates in substrate binding. Residues arginine 311, 337–339 (KLD), and 419–421 (STG) contribute to the GTP site.

The protein belongs to the adenylosuccinate synthetase family. In terms of assembly, homodimer. It depends on Mg(2+) as a cofactor.

It localises to the cytoplasm. It catalyses the reaction IMP + L-aspartate + GTP = N(6)-(1,2-dicarboxyethyl)-AMP + GDP + phosphate + 2 H(+). It functions in the pathway purine metabolism; AMP biosynthesis via de novo pathway; AMP from IMP: step 1/2. In terms of biological role, plays an important role in the de novo pathway of purine nucleotide biosynthesis. Catalyzes the first committed step in the biosynthesis of AMP from IMP. The protein is Adenylosuccinate synthetase of Dechloromonas aromatica (strain RCB).